The sequence spans 91 residues: DNA-directed RNA polymerase subunit omega (91 aa).

The protein belongs to the RNA polymerase subunit omega family. The RNAP catalytic core consists of 2 alpha, 1 beta, 1 beta' and 1 omega subunit. When a sigma factor is associated with the core the holoenzyme is formed, which can initiate transcription.

It carries out the reaction RNA(n) + a ribonucleoside 5'-triphosphate = RNA(n+1) + diphosphate. Promotes RNA polymerase assembly. Latches the N- and C-terminal regions of the beta' subunit thereby facilitating its interaction with the beta and alpha subunits. The chain is DNA-directed RNA polymerase subunit omega from Psychromonas ingrahamii (strain DSM 17664 / CCUG 51855 / 37).